We begin with the raw amino-acid sequence, 297 residues long: Band 7 protein AAEL010189 (297 aa).

Positions 1–13 (MGVVESITNSTKP) are enriched in polar residues. Positions 1-30 (MGVVESITNSTKPGVTKKSSPEAEDDSNGE) are disordered. The chain crosses the membrane as a helical span at residues 37–57 (ILIFLSWVLVVLTMPFSLLVC).

This sequence belongs to the band 7/mec-2 family.

It is found in the membrane. This is Band 7 protein AAEL010189 from Aedes aegypti (Yellowfever mosquito).